A 630-amino-acid polypeptide reads, in one-letter code: Cytochrome B pre-mRNA-processing protein 2 (630 aa).

The protein resides in the mitochondrion. Functionally, appears to be specifically required for the splicing of the terminal intron (bI5) of the cytochrome b pre-mRNA. Can also stimulates the splicing of the omega intron of the precursor of large ribosomal RNA. The protein is Cytochrome B pre-mRNA-processing protein 2 (CBP2) of Saccharomyces paradoxus (Yeast).